We begin with the raw amino-acid sequence, 299 residues long: Serpentine receptor class gamma-30 (299 aa).

The next 7 helical transmembrane spans lie at 18 to 38 (GIQFVYFIVGLGFHFAVIKVL), 59 to 79 (ILSVLIILLDLVLIRVFNYIP), 98 to 118 (ILFIEQYLQFVKSLIFCFMVV), 137 to 157 (IIPHVIVFCILCPLLGVWTAF), 189 to 209 (IISSITIVTVCICSVISMLCI), 223 to 243 (LTASALAMSIFYVFALSMNIY), and 260 to 280 (ALTAFAFDIILVCPPVIMLCL).

The protein belongs to the nematode receptor-like protein srg family.

The protein localises to the membrane. The protein is Serpentine receptor class gamma-30 (srg-30) of Caenorhabditis elegans.